A 259-amino-acid chain; its full sequence is Ribonuclease HII (259 aa).

In terms of domain architecture, RNase H type-2 spans 70 to 258; that stretch reads TLIVGIDEVG…VKSLVLGKKE (189 aa). A divalent metal cation is bound by residues Asp-76, Glu-77, and Asp-168.

This sequence belongs to the RNase HII family. Requires Mn(2+) as cofactor. Mg(2+) serves as cofactor.

It localises to the cytoplasm. The catalysed reaction is Endonucleolytic cleavage to 5'-phosphomonoester.. Its function is as follows. Endonuclease that specifically degrades the RNA of RNA-DNA hybrids. In Streptococcus pneumoniae serotype 2 (strain D39 / NCTC 7466), this protein is Ribonuclease HII.